The chain runs to 370 residues: Caffeic acid 3-O-methyltransferase (370 aa).

Positions 1 to 2 (MG) are excised as a propeptide. 135 to 141 (MNQDKVL) serves as a coordination point for substrate. Residues 167 to 185 (AFEYHGTDPRFNKVFNRGM) are substrate binding. Residues Gly-213, Asp-236, Asp-256, Met-257, and Lys-270 each coordinate S-adenosyl-L-methionine. His-274 acts as the Proton acceptor in catalysis.

This sequence belongs to the class I-like SAM-binding methyltransferase superfamily. Cation-independent O-methyltransferase family. COMT subfamily. As to quaternary structure, homodimer.

It carries out the reaction (E)-caffeate + S-adenosyl-L-methionine = (E)-ferulate + S-adenosyl-L-homocysteine + H(+). It functions in the pathway aromatic compound metabolism; phenylpropanoid biosynthesis. Functionally, catalyzes the conversion of caffeic acid to ferulic acid and of 5-hydroxyferulic acid to sinapic acid. The resulting products may subsequently be converted to the corresponding alcohols that are incorporated into lignins. The sequence is that of Caffeic acid 3-O-methyltransferase (COMT) from Clarkia breweri (Fairy fans).